The primary structure comprises 301 residues: UstYa family oxidase phomYd (301 aa).

A disordered region spans residues 1-26 (MEKFFSPSRHNYADLSPTDVPASEES). The chain crosses the membrane as a helical span at residues 47 to 69 (VLVNRLLAASTVALVMVSLWLGW). Short sequence motifs (HXXHC) lie at residues 189–194 (THSVHC) and 218–222 (HTDHC). The N-linked (GlcNAc...) asparagine glycan is linked to Asn275.

The protein belongs to the ustYa family.

Its subcellular location is the membrane. Its pathway is mycotoxin biosynthesis. Functionally, ustYa family oxidase; part of the gene cluster that mediates the biosynthesis of the phomopsins, a group of hexapeptide mycotoxins which infects lupins and causes lupinosis disease in livestock. Within the pathway, phomYd catalyzes the desaturation of the Asp moiety into 2,3-dehydroaspartic acid (dAsp). The pathway starts with the processing of the precursor phomA by several endopeptidases including kexin proteases as well as the cluster-specific S41 family peptidase phomP1 and the oligopeptidase phomG to produce 10 identical copies of the hexapeptide Tyr-Val-Ile-Pro-Ile-Asp. After being excised from the precursor peptide, the core peptides are cyclized and modified post-translationally by enzymes encoded within the gene cluster. The timing and order of proteolysis of the phomA precursor and PTMs are still unknown. Two tyrosinase-like enzymes, phomQ1 and phomQ2, catalyze the chlorination and hydroxylation of Tyr, respectively. PhomYb, is proposed to be involved in the construction of the macrocyclic structure. The other 4 ustYa family proteins may be involved in PTMs that generate the unique structure of phomopsin A. PhomYa is required for the hydroxylation of C-beta of Tyr. PhomYc, phomYd, and phomYe are responsible for the biosynthesis of 2,3-dehydroisoleucine (dIle), 2,3-dehydroaspartic acid (dAsp), and 3,4-dehydroproline (dPro), respectively. While dIle formation by phomYc is indispensable for the installation of dAsp by phomYd, the order of the other PTMs have not been elucidated yet. Most of the biosynthetic enzymes likely have broad substrate specificity, and thus, there might be a metabolic grid from a precursor to phomopsin A. The enzyme(s) responsible for the biosynthesis of 3,4-dehydrovaline (dVal) have also not been identified yet. Finally, phomM acts as an S-adenosylmethionine-dependent alpha-N-methyltransferase that catalyzes two successive N-methylation reactions, converting N-desmethyl-phomopsin A to phomopsin A and phomopsin A further to an N,N-dimethylated congener called phomopsin E. The chain is UstYa family oxidase phomYd from Diaporthe leptostromiformis (Lupinosis disease fungus).